A 187-amino-acid chain; its full sequence is UPF0232 protein MMAR_0004 (187 aa).

2 disordered regions span residues 1 to 77 (MSDD…QPLG) and 166 to 187 (ASPSWRKGPRHIAGRGPRDTYG). The segment covering 14–30 (AARDELSGMDLVRRTLA) has biased composition (basic and acidic residues). Positions 31 to 55 (EARAAARARGQDPGRGFAAGPAPRR) are enriched in low complexity.

It belongs to the UPF0232 family.

This chain is UPF0232 protein MMAR_0004, found in Mycobacterium marinum (strain ATCC BAA-535 / M).